The primary structure comprises 263 residues: L-aspartate dehydrogenase (263 aa).

NAD(+) is bound by residues alanine 120 and asparagine 186. Histidine 216 is an active-site residue.

The protein belongs to the L-aspartate dehydrogenase family.

The catalysed reaction is L-aspartate + NADP(+) + H2O = oxaloacetate + NH4(+) + NADPH + H(+). It catalyses the reaction L-aspartate + NAD(+) + H2O = oxaloacetate + NH4(+) + NADH + H(+). It functions in the pathway cofactor biosynthesis; NAD(+) biosynthesis; iminoaspartate from L-aspartate (dehydrogenase route): step 1/1. Specifically catalyzes the NAD or NADP-dependent dehydrogenation of L-aspartate to iminoaspartate. This Psychrobacter cryohalolentis (strain ATCC BAA-1226 / DSM 17306 / VKM B-2378 / K5) protein is L-aspartate dehydrogenase.